Reading from the N-terminus, the 153-residue chain is Endoribonuclease YbeY (153 aa).

3 residues coordinate Zn(2+): histidine 116, histidine 120, and histidine 126.

This sequence belongs to the endoribonuclease YbeY family. It depends on Zn(2+) as a cofactor.

It localises to the cytoplasm. Functionally, single strand-specific metallo-endoribonuclease involved in late-stage 70S ribosome quality control and in maturation of the 3' terminus of the 16S rRNA. The sequence is that of Endoribonuclease YbeY from Clavibacter sepedonicus (Clavibacter michiganensis subsp. sepedonicus).